A 130-amino-acid polypeptide reads, in one-letter code: GYLYHPAYYYGAGASTQFKNQDAIGNYNFGYNEGHATGGTFRREFGDALGNVKVGSYGLTDADGRRRVVTYKADASGFNANVHTNEPGTDSSKDPANTLVNKAVLPTTYYGGYYPGHYYGHYAPYHYGYY.

Residues 24–90 (IGNYNFGYNE…NVHTNEPGTD (67 aa)) form the Chitin-binding type R&amp;R domain.

This chain is Cuticle protein 14 isoform a, found in Limulus polyphemus (Atlantic horseshoe crab).